The sequence spans 211 residues: Pyridoxine/pyridoxamine 5'-phosphate oxidase (211 aa).

Substrate is bound by residues 7-10 (RREY) and Lys65. FMN is bound by residues 60-65 (RIVLLK), 75-76 (FT), Lys82, and Gln104. 3 residues coordinate substrate: Tyr122, Arg126, and Ser130. FMN is bound by residues 139–140 (QS) and Trp184. 190–192 (RLH) contributes to the substrate binding site. Residue Arg194 coordinates FMN.

It belongs to the pyridoxamine 5'-phosphate oxidase family. As to quaternary structure, homodimer. FMN serves as cofactor.

It catalyses the reaction pyridoxamine 5'-phosphate + O2 + H2O = pyridoxal 5'-phosphate + H2O2 + NH4(+). The enzyme catalyses pyridoxine 5'-phosphate + O2 = pyridoxal 5'-phosphate + H2O2. The protein operates within cofactor metabolism; pyridoxal 5'-phosphate salvage; pyridoxal 5'-phosphate from pyridoxamine 5'-phosphate: step 1/1. Its pathway is cofactor metabolism; pyridoxal 5'-phosphate salvage; pyridoxal 5'-phosphate from pyridoxine 5'-phosphate: step 1/1. Catalyzes the oxidation of either pyridoxine 5'-phosphate (PNP) or pyridoxamine 5'-phosphate (PMP) into pyridoxal 5'-phosphate (PLP). The polypeptide is Pyridoxine/pyridoxamine 5'-phosphate oxidase (Teredinibacter turnerae (strain ATCC 39867 / T7901)).